The following is a 184-amino-acid chain: NADH-quinone oxidoreductase subunit B (184 aa).

[4Fe-4S] cluster contacts are provided by Cys-37, Cys-38, Cys-103, and Cys-132.

This sequence belongs to the complex I 20 kDa subunit family. NDH-1 is composed of 14 different subunits. Subunits NuoB, C, D, E, F, and G constitute the peripheral sector of the complex. [4Fe-4S] cluster serves as cofactor.

Its subcellular location is the cell membrane. The catalysed reaction is a quinone + NADH + 5 H(+)(in) = a quinol + NAD(+) + 4 H(+)(out). In terms of biological role, NDH-1 shuttles electrons from NADH, via FMN and iron-sulfur (Fe-S) centers, to quinones in the respiratory chain. The immediate electron acceptor for the enzyme in this species is believed to be a menaquinone. Couples the redox reaction to proton translocation (for every two electrons transferred, four hydrogen ions are translocated across the cytoplasmic membrane), and thus conserves the redox energy in a proton gradient. The chain is NADH-quinone oxidoreductase subunit B from Beutenbergia cavernae (strain ATCC BAA-8 / DSM 12333 / CCUG 43141 / JCM 11478 / NBRC 16432 / NCIMB 13614 / HKI 0122).